Reading from the N-terminus, the 222-residue chain is MCPLRNLLLVATLVLLNHLDHLSLGRSLPATTAGPGMFKCLNHSQNLLKAVSNTLQKAKQTLEFYSCTSEEIDHEDITKDKTSTVEACLPLELATNESCLAARETSLITNGNCLTSGKTSFMTTLCLSSIYEDLKMYHVEFQAMNAKLLMDPKRQIFLDQNMLTAITELMQALNFNSETVPQKPSLEELDFYKTKIKLCILLHAFRIRAVTIDRMMSYLNSS.

Positions 1-25 are cleaved as a signal peptide; it reads MCPLRNLLLVATLVLLNHLDHLSLG. 3 disulfide bridges follow: C40–C113, C67–C199, and C88–C126. N-linked (GlcNAc...) asparagine glycans are attached at residues N42 and N96.

Belongs to the IL-6 superfamily. As to quaternary structure, heterodimer with IL12B; disulfide-linked. This heterodimer is known as interleukin IL-12. Heterodimer with EBI3/IL27B; not disulfide-linked. This heterodimer is known as interleukin IL-35. Interacts with NBR1; this interaction promotes IL-12 secretion.

The protein localises to the secreted. In terms of biological role, heterodimerizes with IL12B to form the IL-12 cytokine or with EBI3/IL27B to form the IL-35 cytokine. IL-12 is primarily produced by professional antigen-presenting cells (APCs) such as B-cells and dendritic cells (DCs) as well as macrophages and granulocytes and regulates T-cell and natural killer-cell responses, induces the production of interferon-gamma (IFN-gamma), favors the differentiation of T-helper 1 (Th1) cells and is an important link between innate resistance and adaptive immunity. Mechanistically, exerts its biological effects through a receptor composed of IL12R1 and IL12R2 subunits. Binding to the receptor results in the rapid tyrosine phosphorylation of a number of cellular substrates including the JAK family kinases TYK2 and JAK2. In turn, recruited STAT4 gets phosphorylated and translocates to the nucleus where it regulates cytokine/growth factor responsive genes. As part of IL-35, plays essential roles in maintaining the immune homeostasis of the liver microenvironment and also functions as an immune-suppressive cytokine. Mediates biological events through unconventional receptors composed of IL12RB2 and gp130/IL6ST heterodimers or homodimers. Signaling requires the transcription factors STAT1 and STAT4, which form a unique heterodimer that binds to distinct DNA sites. The polypeptide is Interleukin-12 subunit alpha (IL12A) (Sus scrofa (Pig)).